The primary structure comprises 463 residues: Mitochondrial dynamics protein MID51 (463 aa).

Over 1–23 (MAGAGERKGKKDDNGIGTAIDFV) the chain is Mitochondrial intermembrane. A helical transmembrane segment spans residues 24 to 46 (LSNARLVLGVGGAAMLGIATLAV). The Cytoplasmic segment spans residues 47 to 463 (KRMYDRAISA…LSEPEVLLQT (417 aa)). The dimerization stretch occupies residues 49–195 (MYDRAISAPT…LSGSLYDDLQ (147 aa)). Serine 55, serine 59, serine 79, and serine 94 each carry phosphoserine. The interval 57-79 (PTSPTRLSHSGKRSWEEPNWMGS) is disordered. The tract at residues 104–123 (AFDTDTFCPPRPKPVARKGQ) is disordered. An important for interaction with DNM1L region spans residues 160 to 169 (AAVDICAELR). 3 residues coordinate ADP: serine 187, serine 189, and histidine 201. Positions 234 to 243 (RRENPEYFPR) are important for interaction with DNM1L. Residues serine 340, arginine 342, and lysine 368 each contribute to the ADP site.

Belongs to the MID49/MID51 family. In terms of assembly, homodimer. Interacts with DNM1L.

The protein localises to the mitochondrion outer membrane. In terms of biological role, mitochondrial outer membrane protein which regulates mitochondrial fission/fusion dynamics. Promotes the recruitment and association of the fission mediator dynamin-related protein 1 (DNM1L) to the mitochondrial surface independently of the mitochondrial fission FIS1 and MFF proteins. Regulates DNM1L GTPase activity and DNM1L oligomerization. Binds ADP and can also bind GDP, although with lower affinity. Does not bind CDP, UDP, ATP, AMP or GTP. Inhibits DNM1L GTPase activity in the absence of bound ADP. Requires ADP to stimulate DNM1L GTPase activity and the assembly of DNM1L into long, oligomeric tubules with a spiral pattern, as opposed to the ring-like DNM1L oligomers observed in the absence of bound ADP. Does not require ADP for its function in recruiting DNM1L. This is Mitochondrial dynamics protein MID51 (MIEF1) from Pongo abelii (Sumatran orangutan).